Here is a 361-residue protein sequence, read N- to C-terminus: Protein C42 (361 aa).

An LXCXE motif region spans residues 32-36; it reads LLCDE. The Nuclear localization signal motif lies at 357–360; it reads KRKK.

Belongs to the baculoviridae C42 protein family. In terms of assembly, forms a complex with proteins E27 and p78/83. The interaction with p78/83 mediates nuclear translocation of P78/83. Interacts with protein Ac102. Interacts with IE0.

The protein resides in the host nucleus. The protein localises to the virion. Functionally, plays a role in host nuclear actin polymerization by recruiting p78/73 protein that is capable of activating an actin-related protein 2/3 complex to initiate nuclear actin polymerization. The chain is Protein C42 from Lepidoptera (butterflies and moths).